Consider the following 340-residue polypeptide: Aldose 1-epimerase (340 aa).

Arginine 77 is a substrate binding site. Histidine 172 acts as the Proton donor in catalysis. Aspartate 243 is a substrate binding site. Glutamate 305 acts as the Proton acceptor in catalysis.

It belongs to the aldose epimerase family.

It localises to the cytoplasm. It carries out the reaction alpha-D-glucose = beta-D-glucose. It functions in the pathway carbohydrate metabolism; hexose metabolism. Its function is as follows. Mutarotase converts alpha-aldose to the beta-anomer. It is active on D-glucose, L-arabinose, D-xylose, D-galactose, maltose and lactose. In Haemophilus influenzae (strain ATCC 51907 / DSM 11121 / KW20 / Rd), this protein is Aldose 1-epimerase (galM).